Consider the following 464-residue polypeptide: Cysteine--tRNA ligase (464 aa).

Cysteine 28 serves as a coordination point for Zn(2+). A 'HIGH' region motif is present at residues valine 30 to histidine 40. Cysteine 209, histidine 234, and glutamate 238 together coordinate Zn(2+). The 'KMSKS' region signature appears at lysine 266–serine 270. Lysine 269 provides a ligand contact to ATP.

It belongs to the class-I aminoacyl-tRNA synthetase family. As to quaternary structure, monomer. Zn(2+) serves as cofactor.

The protein resides in the cytoplasm. The enzyme catalyses tRNA(Cys) + L-cysteine + ATP = L-cysteinyl-tRNA(Cys) + AMP + diphosphate. The chain is Cysteine--tRNA ligase (cysS) from Buchnera aphidicola subsp. Acyrthosiphon pisum (strain APS) (Acyrthosiphon pisum symbiotic bacterium).